Here is a 516-residue protein sequence, read N- to C-terminus: MDEVGTQERIRIFDTTLRDGEQAPGISLDPLEKLEIAEQLARLGVDIIEAGFPVASQGDFDAVRQIARQVHGPVICGLSRTHVADIERCYEAVRDAEHHRIHVFISTSPSHLEHMLRMSEDQVVEAVRRAIARARELVDDVEFSPQDATRTPLPFLYRVLQVAVDEGASTLNIPDTVGYGIPWDFARMVESVRREVAGSYVISCHCHNDLGLATANSLAAVAAGARQVECCINGIGERAGNAALEEVVMGLAIRSDVIGDVTTGIDTRELARTSRLVSRLTGYPVQYNKAVVGRNAFAHESGIHQHGVLTDRSTYEVIDAASVGQEAAQIVLGKHSGRHAFQEALARMGIALEGDALNATFQRFKELADRKVELSEADLEAIVAEELGTTLADRFELVSFRVEAGTGREAVASATVLVDGTPVEASASGNGMVDALGRVLAEATALEARLTGFSVTSVTGGADALGSVAVTVDVGGHEVSGRGVSTDIVEASARALLNALNRAARVREKASNRETP.

The region spanning 10-271 (IRIFDTTLRD…TTGIDTRELA (262 aa)) is the Pyruvate carboxyltransferase domain. Mn(2+)-binding residues include aspartate 19, histidine 205, histidine 207, and asparagine 241. The segment at 396 to 516 (ELVSFRVEAG…REKASNRETP (121 aa)) is regulatory domain.

This sequence belongs to the alpha-IPM synthase/homocitrate synthase family. LeuA type 1 subfamily. In terms of assembly, homodimer. The cofactor is Mn(2+).

Its subcellular location is the cytoplasm. It carries out the reaction 3-methyl-2-oxobutanoate + acetyl-CoA + H2O = (2S)-2-isopropylmalate + CoA + H(+). It functions in the pathway amino-acid biosynthesis; L-leucine biosynthesis; L-leucine from 3-methyl-2-oxobutanoate: step 1/4. In terms of biological role, catalyzes the condensation of the acetyl group of acetyl-CoA with 3-methyl-2-oxobutanoate (2-ketoisovalerate) to form 3-carboxy-3-hydroxy-4-methylpentanoate (2-isopropylmalate). In Acidimicrobium ferrooxidans (strain DSM 10331 / JCM 15462 / NBRC 103882 / ICP), this protein is 2-isopropylmalate synthase.